The following is a 167-amino-acid chain: Large ribosomal subunit protein uL10 (167 aa).

It belongs to the universal ribosomal protein uL10 family. As to quaternary structure, part of the ribosomal stalk of the 50S ribosomal subunit. The N-terminus interacts with L11 and the large rRNA to form the base of the stalk. The C-terminus forms an elongated spine to which L12 dimers bind in a sequential fashion forming a multimeric L10(L12)X complex.

Forms part of the ribosomal stalk, playing a central role in the interaction of the ribosome with GTP-bound translation factors. The sequence is that of Large ribosomal subunit protein uL10 from Lactiplantibacillus plantarum (strain ATCC BAA-793 / NCIMB 8826 / WCFS1) (Lactobacillus plantarum).